The sequence spans 171 residues: 6,7-dimethyl-8-ribityllumazine synthase (171 aa).

5-amino-6-(D-ribitylamino)uracil contacts are provided by residues F24, 58–60 (ALE), and 82–84 (AVI). (2S)-2-hydroxy-3-oxobutyl phosphate is bound at residue 87–88 (ET). The Proton donor role is filled by H90. A 5-amino-6-(D-ribitylamino)uracil-binding site is contributed by N115. Position 129 (R129) interacts with (2S)-2-hydroxy-3-oxobutyl phosphate. A disordered region spans residues 150-171 (ALDQLGDDEDEEEDEDDEEERA). The segment covering 154–171 (LGDDEDEEEDEDDEEERA) has biased composition (acidic residues).

Belongs to the DMRL synthase family.

It catalyses the reaction (2S)-2-hydroxy-3-oxobutyl phosphate + 5-amino-6-(D-ribitylamino)uracil = 6,7-dimethyl-8-(1-D-ribityl)lumazine + phosphate + 2 H2O + H(+). It functions in the pathway cofactor biosynthesis; riboflavin biosynthesis; riboflavin from 2-hydroxy-3-oxobutyl phosphate and 5-amino-6-(D-ribitylamino)uracil: step 1/2. Functionally, catalyzes the formation of 6,7-dimethyl-8-ribityllumazine by condensation of 5-amino-6-(D-ribitylamino)uracil with 3,4-dihydroxy-2-butanone 4-phosphate. This is the penultimate step in the biosynthesis of riboflavin. The polypeptide is 6,7-dimethyl-8-ribityllumazine synthase (Burkholderia cenocepacia (strain HI2424)).